The chain runs to 754 residues: DNA topoisomerase 4 subunit A (754 aa).

The Topo IIA-type catalytic domain occupies 38–501 (LPHIGDGLKP…EARALSETEL (464 aa)). The O-(5'-phospho-DNA)-tyrosine intermediate role is filled by Tyr-127.

Belongs to the type II topoisomerase GyrA/ParC subunit family. ParC type 1 subfamily. In terms of assembly, heterotetramer composed of ParC and ParE.

The protein localises to the cell membrane. It carries out the reaction ATP-dependent breakage, passage and rejoining of double-stranded DNA.. In terms of biological role, topoisomerase IV is essential for chromosome segregation. It relaxes supercoiled DNA. Performs the decatenation events required during the replication of a circular DNA molecule. This Pseudomonas aeruginosa (strain ATCC 15692 / DSM 22644 / CIP 104116 / JCM 14847 / LMG 12228 / 1C / PRS 101 / PAO1) protein is DNA topoisomerase 4 subunit A.